The sequence spans 639 residues: Versicolorin B synthase stcN (639 aa).

An N-terminal signal peptide occupies residues 1–19 (MPAWSLLVLSALPVVGMFA). FAD-binding positions include 77–78 (TA) and 98–99 (EA). Asn-109 carries an N-linked (GlcNAc...) asparagine glycan. 164-167 (GAML) is a binding site for FAD. Asn-214 carries N-linked (GlcNAc...) asparagine glycosylation. The PAS domain occupies 263–301 (GFSNGQLLGRSYITHTIHPKTRRRDTASTSYLQTALRTS). Residues Asn-444 and Asn-501 are each glycosylated (N-linked (GlcNAc...) asparagine). Residues Ala-609 and 620–621 (PM) contribute to the FAD site.

Belongs to the GMC oxidoreductase family. As to quaternary structure, homodimer. Requires FAD as cofactor.

It is found in the cytoplasm. It localises to the cytosol. It carries out the reaction (2S-3S)-versiconal hemiacetal = versicolorin B + H2O. It catalyses the reaction (S)-5'-oxoaverantin + H(+) = (1'S,5'S)-averufin + H2O. Its pathway is mycotoxin biosynthesis; sterigmatocystin biosynthesis. Functionally, norsolorinic acid reductase; part of the gene cluster that mediates the biosynthesis of sterigmatocystin (ST), a polyketide-derived furanocoumarin which is part of the most toxic and carcinogenic compounds among the known mycotoxins. The first step in the biosynthesis of sterigmatocystin is the production of hexanoate by the fatty acid synthase (FAS) units stcJ and stcK. The polyketide backbone is assembled by the non-reducing polyketide synthase stcA by condensation of the starter hexanoyl-CoA and 7 malonyl-CoA extender units followed by cyclization and release of norsolorinic acid. Norsolorinic acid is the first stable intermediate in the biosynthesis of sterigmatocystin and is converted into averantin (AVN) by the ketoreductase stcE which reduces the hexanoate ketone to an alcohol. Averantin is then oxidized into 5'-hydroxyaverantin (HAVN) by the cytochrome P450 monooxygenase stcF. 5'-hydroxyaverantin is further converted to 5'-oxyaverantin (OAVN) by the 5'-hydroxyaverantin dehydrogenase stcG. The next step is the conversion of OAVN into averufin (AVF) which is catalyzed by a yet to be identified enzyme. The cytochrome P450 monooxygenase stcB and the flavin-binding monooxygenase stcW are both required for the conversion of averufin to 1-hydroxyversicolorone. The esterase stcI probably catalyzes the formation of versiconal hemiacetal acetate from 1-hydroxyversicolorone. The oxydoreductase stcN then probably catalyzes the biosynthetic step from versiconal to versicolorin B (VERB). The next step is performed by the versicolorin B desaturase stcL to produce versicolorin A (VERA). The ketoreductase stcU and the cytochrome P450 monooxygenase stcS are involved in the conversion of versicolorin A to demethylsterigmatocystin. The Baeyer-Villiger oxidas stcQ and the reductase stcR might be involved in the biosynthetic step from versicolorin A to demethylsterigmatocystin. The final step in the biosynthesis of sterigmatocystin is the methylation of demethylsterigmatocystin catalyzed by the methyltransferase stcP. This Emericella nidulans (strain FGSC A4 / ATCC 38163 / CBS 112.46 / NRRL 194 / M139) (Aspergillus nidulans) protein is Versicolorin B synthase stcN.